The chain runs to 560 residues: DNA ligase B (560 aa).

Lys124 serves as the catalytic N6-AMP-lysine intermediate.

The protein belongs to the NAD-dependent DNA ligase family. LigB subfamily.

It catalyses the reaction NAD(+) + (deoxyribonucleotide)n-3'-hydroxyl + 5'-phospho-(deoxyribonucleotide)m = (deoxyribonucleotide)n+m + AMP + beta-nicotinamide D-nucleotide.. Catalyzes the formation of phosphodiester linkages between 5'-phosphoryl and 3'-hydroxyl groups in double-stranded DNA using NAD as a coenzyme and as the energy source for the reaction. In Escherichia coli O7:K1 (strain IAI39 / ExPEC), this protein is DNA ligase B.